A 76-amino-acid chain; its full sequence is MFVLLIILSIILAQVTDAHSELHVRRVCGTAIIKNIMRLCPGVPACENGEVPSPTEYCSMGYSDSQVKYLCCPTSQ.

The signal sequence occupies residues 1–18; that stretch reads MFVLLIILSIILAQVTDA. Cystine bridges form between Cys-28-Cys-58, Cys-40-Cys-71, and Cys-46-Cys-72.

It belongs to the insulin family.

It is found in the secreted. The polypeptide is Probable insulin-like peptide alpha-type 3 (ins-23) (Caenorhabditis elegans).